Consider the following 1665-residue polypeptide: Cortactin-binding protein 2 (1665 aa).

Positions 120-277 form a coiled coil; it reads RKMQERMSTQ…EQLKRGNDSK (158 aa). Disordered stretches follow at residues 203–222, 368–480, and 500–620; these read EKKK…RRST, VSSV…SPTS, and RFTS…PSID. Composition is skewed to polar residues over residues 388–399 and 410–429; these read SIGSTPDLASST and TGQT…SMHS. Residues 455-469 show a composition bias toward low complexity; sequence QGNANDQDQNGNTTQ. A compositionally biased stretch (polar residues) spans 470–480; it reads SPPSRDVSPTS. Position 500 is an asymmetric dimethylarginine (Arg-500). 5 ANK repeats span residues 711-741, 745-774, 778-807, 811-840, and 844-873; these read GRPT…DINY, DGHS…QIDA, NGFT…NIDH, GGQT…DRSV, and DGWT…PTLG. A disordered region spans residues 875 to 902; sequence SLNEEEPEPGAFDLDQGQEGSEGTAKPV. Residues 914 to 944 form an ANK 6 repeat; sequence EGWTAAHIAASKGFKNCLEILCRHGGLEPER. The segment at 1447–1495 is disordered; the sequence is CSKKKGENGAWRKVSTNPRKKSGRFSSPTWSKPDLGEEGTKNKTMSQPN. Ser-1526 carries the phosphoserine modification. The segment at 1575–1665 is disordered; that stretch reads NNLRMPVSQK…KNEQVQKPNK (91 aa). Composition is skewed to low complexity over residues 1590 to 1604 and 1623 to 1641; these read SSHQ…TSKT and SQCS…TRQT. Residues 1656 to 1665 show a composition bias toward polar residues; sequence KNEQVQKPNK.

In terms of assembly, interacts with CTTN/cortactin SH3 domain. Interacts with STRN, STRN4/zinedin and MOB4/phocein; this interactions mediate the association with the STRIPAK core complex and may regulate dendritic spine distribution of the STRIPAK complex in hippocampal neurons. Activation of glutamate receptors weakens the interaction with STRN and STRN4.

The protein localises to the cytoplasm. Its subcellular location is the cell cortex. The protein resides in the cell projection. It localises to the dendritic spine. Functionally, regulates the dendritic spine distribution of CTTN/cortactin in hippocampal neurons, and thus controls dendritic spinogenesis and dendritic spine maintenance. Associates with the striatin-interacting phosphatase and kinase (STRIPAK) core complex to regulate dendritic spine distribution of the STRIPAK complex in hippocampal neurons. This Dasypus novemcinctus (Nine-banded armadillo) protein is Cortactin-binding protein 2 (CTTNBP2).